The sequence spans 647 residues: DNA topoisomerase 3 (647 aa).

Residues 2-135 form the Toprim domain; sequence TRLFIAEKPS…KKETVQRLLI (134 aa). E8, D104, and D106 together coordinate Mg(2+). The 453-residue stretch at 156-608 folds into the Topo IA-type catalytic domain; the sequence is FIPLSVSALA…TLQGRLEQLI (453 aa). Residues 195-200 form an interaction with DNA region; the sequence is SVGRVQ. The active-site O-(5'-phospho-DNA)-tyrosine intermediate is the Y332.

This sequence belongs to the type IA topoisomerase family. Mg(2+) is required as a cofactor.

It carries out the reaction ATP-independent breakage of single-stranded DNA, followed by passage and rejoining.. Its function is as follows. Releases the supercoiling and torsional tension of DNA, which is introduced during the DNA replication and transcription, by transiently cleaving and rejoining one strand of the DNA duplex. Introduces a single-strand break via transesterification at a target site in duplex DNA. The scissile phosphodiester is attacked by the catalytic tyrosine of the enzyme, resulting in the formation of a DNA-(5'-phosphotyrosyl)-enzyme intermediate and the expulsion of a 3'-OH DNA strand. The free DNA strand then undergoes passage around the unbroken strand, thus removing DNA supercoils. Finally, in the religation step, the DNA 3'-OH attacks the covalent intermediate to expel the active-site tyrosine and restore the DNA phosphodiester backbone. This is DNA topoisomerase 3 from Vibrio cholerae serotype O1 (strain ATCC 39315 / El Tor Inaba N16961).